Here is a 266-residue protein sequence, read N- to C-terminus: Glucosamine-6-phosphate deaminase (266 aa).

Aspartate 72 acts as the Proton acceptor; for enolization step in catalysis. Aspartate 141 (for ring-opening step) is an active-site residue. The active-site Proton acceptor; for ring-opening step is histidine 143. Glutamate 148 functions as the For ring-opening step in the catalytic mechanism.

Belongs to the glucosamine/galactosamine-6-phosphate isomerase family. NagB subfamily. As to quaternary structure, homohexamer.

The catalysed reaction is alpha-D-glucosamine 6-phosphate + H2O = beta-D-fructose 6-phosphate + NH4(+). The protein operates within amino-sugar metabolism; N-acetylneuraminate degradation; D-fructose 6-phosphate from N-acetylneuraminate: step 5/5. With respect to regulation, allosterically activated by N-acetylglucosamine 6-phosphate (GlcNAc6P). In terms of biological role, catalyzes the reversible isomerization-deamination of glucosamine 6-phosphate (GlcN6P) to form fructose 6-phosphate (Fru6P) and ammonium ion. This Aliivibrio salmonicida (strain LFI1238) (Vibrio salmonicida (strain LFI1238)) protein is Glucosamine-6-phosphate deaminase.